The following is a 430-amino-acid chain: Mitochondrial distribution and morphology protein 10 (430 aa).

The segment covering 215-234 (SSSAMNPPSGTSASETNGSG) has biased composition (polar residues). Disordered stretches follow at residues 215 to 237 (SSSA…GPSV) and 339 to 393 (LGAN…GPKE).

The protein belongs to the MDM10 family. As to quaternary structure, component of the ER-mitochondria encounter structure (ERMES) or MDM complex, composed of MMM1, MDM10, MDM12 and MDM34. Associates with the mitochondrial outer membrane sorting assembly machinery SAM(core) complex.

The protein resides in the mitochondrion outer membrane. Component of the ERMES/MDM complex, which serves as a molecular tether to connect the endoplasmic reticulum and mitochondria. Components of this complex are involved in the control of mitochondrial shape and protein biogenesis and may function in phospholipid exchange. MDM10 is involved in the late assembly steps of the general translocase of the mitochondrial outer membrane (TOM complex). Functions in the TOM40-specific route of the assembly of outer membrane beta-barrel proteins, including the association of TOM40 with the receptor TOM22 and small TOM proteins. Can associate with the SAM(core) complex as well as the MDM12-MMM1 complex, both involved in late steps of the major beta-barrel assembly pathway, that is responsible for biogenesis of all outer membrane beta-barrel proteins. May act as a switch that shuttles between both complexes and channels precursor proteins into the TOM40-specific pathway. Plays a role in mitochondrial morphology and in the inheritance of mitochondria. The polypeptide is Mitochondrial distribution and morphology protein 10 (Chaetomium globosum (strain ATCC 6205 / CBS 148.51 / DSM 1962 / NBRC 6347 / NRRL 1970) (Soil fungus)).